Here is a 110-residue protein sequence, read N- to C-terminus: Small ribosomal subunit protein uS17 (110 aa).

Belongs to the universal ribosomal protein uS17 family. Part of the 30S ribosomal subunit.

Functionally, one of the primary rRNA binding proteins, it binds specifically to the 5'-end of 16S ribosomal RNA. The chain is Small ribosomal subunit protein uS17 from Petrotoga mobilis (strain DSM 10674 / SJ95).